Consider the following 406-residue polypeptide: Probable 4-hydroxyphenylpyruvate dioxygenase 2 (406 aa).

VOC domains follow at residues 22–174 (GFDH…LINR) and 205–363 (EIDH…IFSK). 3 residues coordinate Fe cation: H208, H291, and E374.

It belongs to the 4HPPD family. Fe cation is required as a cofactor.

It carries out the reaction 3-(4-hydroxyphenyl)pyruvate + O2 = homogentisate + CO2. Its pathway is amino-acid degradation; L-phenylalanine degradation; acetoacetate and fumarate from L-phenylalanine: step 3/6. The sequence is that of Probable 4-hydroxyphenylpyruvate dioxygenase 2 from Aspergillus fumigatus (strain ATCC MYA-4609 / CBS 101355 / FGSC A1100 / Af293) (Neosartorya fumigata).